Reading from the N-terminus, the 463-residue chain is Lipase 5 (463 aa).

The N-terminal stretch at 1–14 (MLYLILFLIAPIYA) is a signal peptide. A disulfide bridge connects residues C110 and C281. S194 (charge relay system) is an active-site residue. N229 carries an N-linked (GlcNAc...) asparagine glycan. Active-site charge relay system residues include D343 and H376. C359 and C404 form a disulfide bridge.

It belongs to the AB hydrolase superfamily. Lipase family. Class Lip subfamily.

The protein resides in the secreted. It carries out the reaction a triacylglycerol + H2O = a diacylglycerol + a fatty acid + H(+). Its activity is regulated as follows. Fe(2)+, Fe(3+), Hg(2+) as well as ethylenediaminetetraacetic acid (EDTA) and phenylmethanesulfonyl fluoride (PMSF) strongly inhibit the lipase activity. Surfactants such as Tween 20, Tween 80 and TritonX-100 show also inhibitory effect in the lipase activity. Sodium dodecyl sulfate (SDS) sharply decreases the lipase activity by 85%. Methanol, ethanol, and acetone have also negative effect on the lipase activity, with residual activities at 48%, 24% and 44% respectively. Finally, lipase activity is almost lost in the presence of isopropanol alcohol. Functionally, secreted lipase that is able to hydrolyze both the neutral triacylglycerols and the monopalmitate ester Tween 40, allowing the use of hydrolyzed products as carbon sources. Exhibits a preference for the short and medium chain length p-NP (C4 and C8 acyl group) esters rather than the long chain length p-NP esters (C12, C16 and C18 acyl group). Has broad lipolytic activity, which may be important for colonization and subsequent infection, therefore contributing to the persistence and virulence in human tissue. This chain is Lipase 5, found in Candida albicans (strain SC5314 / ATCC MYA-2876) (Yeast).